Here is a 388-residue protein sequence, read N- to C-terminus: P2X purinoceptor 4 (388 aa).

At methionine 1–arginine 33 the chain is on the cytoplasmic side. Residues threonine 34–tyrosine 54 traverse the membrane as a helical segment. Over glutamine 55–asparagine 338 the chain is Extracellular. 2 residues coordinate ATP: lysine 67 and lysine 69. CTP-binding residues include lysine 67 and lysine 69. 5 N-linked (GlcNAc...) asparagine glycosylation sites follow: asparagine 75, asparagine 110, asparagine 131, asparagine 153, and asparagine 184. 3 disulfide bridges follow: cysteine 116/cysteine 165, cysteine 126/cysteine 149, and cysteine 132/cysteine 159. Residues threonine 186 and leucine 188 each contribute to the ATP site. Threonine 186 contacts CTP. Residues asparagine 199 and asparagine 208 are each glycosylated (N-linked (GlcNAc...) asparagine). 2 disulfide bridges follow: cysteine 217/cysteine 227 and cysteine 261/cysteine 270. ATP is bound by residues asparagine 293, arginine 295, and lysine 313. Asparagine 293, arginine 295, and lysine 313 together coordinate CTP. A helical transmembrane segment spans residues isoleucine 339–tyrosine 359. At cysteine 360–glutamine 388 the chain is on the cytoplasmic side.

It belongs to the P2X receptor family. Functional P2RXs are organized as homomeric and heteromeric trimers. Forms heterotrimer with P2RX1. Interacts with P2RX7 (via C-terminus); this interaction is functional only in the presence of ATP. Forms heterotrimer with P2RX4; functional differences between homomeric P2RX4 and P2RX4/6 heterotrimer are minor. Interacts with AP1M2.

The protein resides in the cell membrane. It is found in the lysosome membrane. It catalyses the reaction K(+)(in) = K(+)(out). The enzyme catalyses Na(+)(in) = Na(+)(out). It carries out the reaction Ca(2+)(in) = Ca(2+)(out). Activated by ATP. pH-dependent and inhibited by acidic pH. Functionally, ATP-gated nonselective transmembrane cation channel permeable to potassium, sodium and calcium. CTP, but not GTP or UTP, functions as a weak affinity agonist for P2RX4. Activated by extracellularly released ATP, it plays multiple role in immunity and central nervous system physiology. Could also function as an ATP-gated cation channel of lysosomal membranes. In Bos taurus (Bovine), this protein is P2X purinoceptor 4 (P2RX4).